Reading from the N-terminus, the 428-residue chain is Serine--tRNA ligase (428 aa).

235-237 (TAE) serves as a coordination point for L-serine. Residue 266-268 (RSE) coordinates ATP. L-serine is bound at residue Glu-289. Residue 353–356 (EISS) coordinates ATP. Ser-389 contributes to the L-serine binding site.

The protein belongs to the class-II aminoacyl-tRNA synthetase family. Type-1 seryl-tRNA synthetase subfamily. As to quaternary structure, homodimer. The tRNA molecule binds across the dimer.

The protein localises to the cytoplasm. It carries out the reaction tRNA(Ser) + L-serine + ATP = L-seryl-tRNA(Ser) + AMP + diphosphate + H(+). The enzyme catalyses tRNA(Sec) + L-serine + ATP = L-seryl-tRNA(Sec) + AMP + diphosphate + H(+). Its pathway is aminoacyl-tRNA biosynthesis; selenocysteinyl-tRNA(Sec) biosynthesis; L-seryl-tRNA(Sec) from L-serine and tRNA(Sec): step 1/1. Its function is as follows. Catalyzes the attachment of serine to tRNA(Ser). Is also able to aminoacylate tRNA(Sec) with serine, to form the misacylated tRNA L-seryl-tRNA(Sec), which will be further converted into selenocysteinyl-tRNA(Sec). The polypeptide is Serine--tRNA ligase (Shewanella baltica (strain OS223)).